A 94-amino-acid polypeptide reads, in one-letter code: Putative pterin-4-alpha-carbinolamine dehydratase (94 aa).

Belongs to the pterin-4-alpha-carbinolamine dehydratase family.

The catalysed reaction is (4aS,6R)-4a-hydroxy-L-erythro-5,6,7,8-tetrahydrobiopterin = (6R)-L-erythro-6,7-dihydrobiopterin + H2O. The protein is Putative pterin-4-alpha-carbinolamine dehydratase of Mycobacterium tuberculosis (strain ATCC 25177 / H37Ra).